Reading from the N-terminus, the 242-residue chain is Megakaryocyte and platelet inhibitory receptor G6b (242 aa).

Residues 1-17 form the signal peptide; it reads MALVLPLLPLLLSKVQG. Residues Asn32 and Asn112 are each glycosylated (N-linked (GlcNAc...) asparagine). Residues 141-161 form a helical membrane-spanning segment; it reads VLIPLLGVGLVLGLGVAGVVW. Short sequence motifs (ITIM motif) lie at residues 210-215 and 236-241; these read LHYADL and TVYAVV. Position 212 is a phosphotyrosine (Tyr212).

In terms of assembly, interacts (via ITIM motif) with PTPN6 and PTPN11. Binds to heparin. In terms of processing, N-glycosylated. May be O-glycosylated. Post-translationally, phosphorylated. In terms of tissue distribution, expressed in mature megakaryocytes and platelets. Not expressed by immature megakaryocytes.

The protein resides in the cell membrane. In terms of biological role, inhibitory receptor that acts as a critical regulator of hematopoietic lineage differentiation, megakaryocyte function and platelet production. Inhibits platelet aggregation and activation by agonists such as ADP and collagen-related peptide. This regulation of megakaryocate function as well as platelet production ann activation is done through the inhibition (via the 2 ITIM motifs) of the receptors CLEC1B and GP6:FcRgamma signaling. Appears to operate in a calcium-independent manner. The sequence is that of Megakaryocyte and platelet inhibitory receptor G6b from Mus musculus (Mouse).